The chain runs to 173 residues: MKALDFDKYIRVIDDFPKPGISFKDITTLLKDGEAYRAAVDAIVERVRESQPDLIVGPEARGFLLGAPVAYALGIGFVPVRKPGKLPGKTVSETYELEYGSDTLEVHADAIQPGQRIAIVDDLLATGGTTSATARLIEKTGAQVAGMSFLIELGFLEGRKRLEGYEVFSLIKY.

This sequence belongs to the purine/pyrimidine phosphoribosyltransferase family. In terms of assembly, homodimer.

The protein resides in the cytoplasm. The catalysed reaction is AMP + diphosphate = 5-phospho-alpha-D-ribose 1-diphosphate + adenine. Its pathway is purine metabolism; AMP biosynthesis via salvage pathway; AMP from adenine: step 1/1. Functionally, catalyzes a salvage reaction resulting in the formation of AMP, that is energically less costly than de novo synthesis. This chain is Adenine phosphoribosyltransferase, found in Desulfitobacterium hafniense (strain Y51).